The following is a 324-amino-acid chain: tRNA-modifying protein YgfZ (324 aa).

Residue W184 coordinates folate.

It belongs to the tRNA-modifying YgfZ family.

It localises to the cytoplasm. Functionally, folate-binding protein involved in regulating the level of ATP-DnaA and in the modification of some tRNAs. It is probably a key factor in regulatory networks that act via tRNA modification, such as initiation of chromosomal replication. The polypeptide is tRNA-modifying protein YgfZ (Vibrio vulnificus (strain CMCP6)).